Reading from the N-terminus, the 106-residue chain is Small ribosomal subunit protein uS10 (106 aa).

The protein belongs to the universal ribosomal protein uS10 family. In terms of assembly, part of the 30S ribosomal subunit.

Its function is as follows. Involved in the binding of tRNA to the ribosomes. The polypeptide is Small ribosomal subunit protein uS10 (Archaeoglobus fulgidus (strain ATCC 49558 / DSM 4304 / JCM 9628 / NBRC 100126 / VC-16)).